Here is a 213-residue protein sequence, read N- to C-terminus: Thiamine-phosphate synthase (213 aa).

Residues 43-47 (QLRDK) and Asn74 each bind 4-amino-2-methyl-5-(diphosphooxymethyl)pyrimidine. 2 residues coordinate Mg(2+): Asp75 and Asp94. Ser113 is a 4-amino-2-methyl-5-(diphosphooxymethyl)pyrimidine binding site. A 2-[(2R,5Z)-2-carboxy-4-methylthiazol-5(2H)-ylidene]ethyl phosphate-binding site is contributed by 142-144 (TAT). Residue Lys145 coordinates 4-amino-2-methyl-5-(diphosphooxymethyl)pyrimidine. 2-[(2R,5Z)-2-carboxy-4-methylthiazol-5(2H)-ylidene]ethyl phosphate contacts are provided by residues Gly173 and 193–194 (VS).

Belongs to the thiamine-phosphate synthase family. It depends on Mg(2+) as a cofactor.

It catalyses the reaction 2-[(2R,5Z)-2-carboxy-4-methylthiazol-5(2H)-ylidene]ethyl phosphate + 4-amino-2-methyl-5-(diphosphooxymethyl)pyrimidine + 2 H(+) = thiamine phosphate + CO2 + diphosphate. The enzyme catalyses 2-(2-carboxy-4-methylthiazol-5-yl)ethyl phosphate + 4-amino-2-methyl-5-(diphosphooxymethyl)pyrimidine + 2 H(+) = thiamine phosphate + CO2 + diphosphate. It carries out the reaction 4-methyl-5-(2-phosphooxyethyl)-thiazole + 4-amino-2-methyl-5-(diphosphooxymethyl)pyrimidine + H(+) = thiamine phosphate + diphosphate. It participates in cofactor biosynthesis; thiamine diphosphate biosynthesis; thiamine phosphate from 4-amino-2-methyl-5-diphosphomethylpyrimidine and 4-methyl-5-(2-phosphoethyl)-thiazole: step 1/1. In terms of biological role, condenses 4-methyl-5-(beta-hydroxyethyl)thiazole monophosphate (THZ-P) and 2-methyl-4-amino-5-hydroxymethyl pyrimidine pyrophosphate (HMP-PP) to form thiamine monophosphate (TMP). This Psychrobacter sp. (strain PRwf-1) protein is Thiamine-phosphate synthase.